The primary structure comprises 416 residues: L-threonine dehydratase biosynthetic IlvA (416 aa).

Lysine 51 is subject to N6-(pyridoxal phosphate)lysine. Residues asparagine 78, 184-188, and serine 309 contribute to the pyridoxal 5'-phosphate site; that span reads GGGGL. Positions 333–407 constitute an ACT-like domain; that stretch reads HYFVINFPQR…FDNRYVNLHG (75 aa).

Belongs to the serine/threonine dehydratase family. Homotetramer. Requires pyridoxal 5'-phosphate as cofactor.

It catalyses the reaction L-threonine = 2-oxobutanoate + NH4(+). Its pathway is amino-acid biosynthesis; L-isoleucine biosynthesis; 2-oxobutanoate from L-threonine: step 1/1. Its function is as follows. Catalyzes the anaerobic formation of alpha-ketobutyrate and ammonia from threonine in a two-step reaction. The first step involved a dehydration of threonine and a production of enamine intermediates (aminocrotonate), which tautomerizes to its imine form (iminobutyrate). Both intermediates are unstable and short-lived. The second step is the nonenzymatic hydrolysis of the enamine/imine intermediates to form 2-ketobutyrate and free ammonia. In the low water environment of the cell, the second step is accelerated by RidA. The polypeptide is L-threonine dehydratase biosynthetic IlvA (ilvA) (Lactococcus lactis subsp. lactis (strain IL1403) (Streptococcus lactis)).